The primary structure comprises 245 residues: 1-(5-phosphoribosyl)-5-[(5-phosphoribosylamino)methylideneamino] imidazole-4-carboxamide isomerase (245 aa).

The Proton acceptor role is filled by D8. D129 functions as the Proton donor in the catalytic mechanism.

It belongs to the HisA/HisF family.

It localises to the cytoplasm. The enzyme catalyses 1-(5-phospho-beta-D-ribosyl)-5-[(5-phospho-beta-D-ribosylamino)methylideneamino]imidazole-4-carboxamide = 5-[(5-phospho-1-deoxy-D-ribulos-1-ylimino)methylamino]-1-(5-phospho-beta-D-ribosyl)imidazole-4-carboxamide. Its pathway is amino-acid biosynthesis; L-histidine biosynthesis; L-histidine from 5-phospho-alpha-D-ribose 1-diphosphate: step 4/9. This chain is 1-(5-phosphoribosyl)-5-[(5-phosphoribosylamino)methylideneamino] imidazole-4-carboxamide isomerase, found in Trichlorobacter lovleyi (strain ATCC BAA-1151 / DSM 17278 / SZ) (Geobacter lovleyi).